A 147-amino-acid chain; its full sequence is Protein YjdN (147 aa).

The protein is Protein YjdN (yjdN) of Escherichia coli (strain K12).